The chain runs to 339 residues: NmrA-like family domain-containing oxidoreductase cpsB (339 aa).

An NADP(+)-binding site is contributed by lysine 142.

Belongs to the NmrA-type oxidoreductase family.

The catalysed reaction is didehydrocampesine A + 2 AH2 = campesine A + 2 A. The protein operates within alkaloid biosynthesis. Functionally, oxidoreductase; part of the gene cluster that mediates the biosynthesis of campesine G, a dimeric indole piperazine alkaloid that shows good insecticidal activity Galleria mellonella. Within the pathway, cpsB reduces the unstable (S,S)-trypyl-valyl dihydropiperazine (didehydrocampesine A) intermediate to (S, S)-trypyl-valyl-piperazine (campesine A) using two equivalents of NAD(P)H. The non-canonical non-ribosomal peptide synthetase cpsA catalyzes the first steps of the pathway by producing L-tryptophanal and L-valinal from their respective amino-acids. These products condensate spontaneously to form trypyl-valyl pyrazine also known as didehydrocampesine A. The NmrA-like family domain-containing oxidoreductase cpsB is the next enzyme in cps pathway and reduces the unstable didehydrocampesine A to campesine A. The methyltransferase cpsF and the acetyltransferase cpsE both recognize N13 of piperazine ring to carry out methylation and acetylation of campesine A to produce campesine C and B, respectively. The cytochrome P450 monooxygenase cpsD then acts as a dimerase that catalyzes oxidative heterocoupling between campesine B and C to produce heterodimers with unexpected 6/5/6/6/6/6/5/6 eight-ring scaffold called campesine D. Finally,the cytochrome P450 monooxygenase cpsC is a regioselective dehydrogenase that catalyzes dehydrogenation reaction towards C2-N1 to produce campesine G. This is NmrA-like family domain-containing oxidoreductase cpsB from Aspergillus campestris (strain IBT 28561).